The chain runs to 226 residues: MRIAELTALLHLASPALPIGAFSYSQGLEAAIEAQLITDADSAREWIASGLTDVLARGELPFLAHQMERWRTHDAESLRVANSEFLASRESAELRRETEQMGWSLRQLCVSLEWGDADRRATLASMTPLAQPTAFAFAAYAHDAAVDATLAAYAFSWVENQAAAALKAVPLGQLAGQRIIVALREPIDAAVTRALATSPDNINTFAPQLGILSARHESQYSRLFRS.

Belongs to the UreF family. UreD, UreF and UreG form a complex that acts as a GTP-hydrolysis-dependent molecular chaperone, activating the urease apoprotein by helping to assemble the nickel containing metallocenter of UreC. The UreE protein probably delivers the nickel.

The protein resides in the cytoplasm. Its function is as follows. Required for maturation of urease via the functional incorporation of the urease nickel metallocenter. This Paraburkholderia xenovorans (strain LB400) protein is Urease accessory protein UreF.